The primary structure comprises 282 residues: Putative phosphoenolpyruvate synthase regulatory protein (282 aa).

162–169 serves as a coordination point for ADP; it reads GVSRSGKT.

Belongs to the pyruvate, phosphate/water dikinase regulatory protein family. PSRP subfamily.

The enzyme catalyses [pyruvate, water dikinase] + ADP = [pyruvate, water dikinase]-phosphate + AMP + H(+). The catalysed reaction is [pyruvate, water dikinase]-phosphate + phosphate + H(+) = [pyruvate, water dikinase] + diphosphate. In terms of biological role, bifunctional serine/threonine kinase and phosphorylase involved in the regulation of the phosphoenolpyruvate synthase (PEPS) by catalyzing its phosphorylation/dephosphorylation. The polypeptide is Putative phosphoenolpyruvate synthase regulatory protein (Psychrobacter arcticus (strain DSM 17307 / VKM B-2377 / 273-4)).